Reading from the N-terminus, the 728-residue chain is MATPGSEPQPFVPALSVATLHPLHHPHHHHHHHQHHGGTGAPGGAGGGGGGSGGFNLPLNRGLERALEEAANSGGLNLSARKLKEFPRTAAPGHDLSDTVQADLSKNRLVEVPMELCHFVSLEILNLYHNCIRVIPEAIVNLQMLTYLNLSRNQLSALPACLCGLPLKVLIASNNKLGSLPEEIGQLKQLMELDVSCNEITALPQQIGQLKSLRELNVRRNYLKVLPQELVDLSLVKFDFSCNKVLVIPICFREMKQLQVLLLENNPLQSPPAQICTKGKVHIFKYLSIQACQIKTADSLYLHTMERPHLHQHVEDGKKDSDSGVGSDNGDKRLSATEPSDEDTVSLNVPMSNIMEEEQIIKEDSCHRLSPVKGEFHQEFQPEPSLLGDSTNSGEERDQFTDRADGLHSEFMNYKARAEDCEELLRIEEDVHWQTEGIISSSKDQDMDIAMIEQLREAVDLLQDPNGLSTDITERSVLNLYPMGSAEALELQDSALNGQIQLETSPVCEVQSDLTLQSNGSQYSPNEIRENSPAVSPTTNSTAPFGLKPRSVFLRPQRNLESIDPQFTIRRKMEQMREEKELVEQLRESIEMRLKVSLHEDLGAALMDGVVLCHLVNHIRPRSVASIHVPSPAVPKLSMAKCRRNVENFLEACRKLGVPEADLCSPCDILQLDFRHIRKTVDTLLALGEKAPPPTSALRSRDLIGFCLVHILFIVLVYITYHWNALSA.

The segment covering 24–36 (HHPHHHHHHHQHH) has biased composition (basic residues). Positions 24–57 (HHPHHHHHHHQHHGGTGAPGGAGGGGGGSGGFNL) are disordered. Residues 37–54 (GGTGAPGGAGGGGGGSGG) are compositionally biased toward gly residues. LRR repeat units lie at residues 98–119 (DTVQ…LCHF), 121–143 (SLEI…VNLQ), 144–166 (MLTY…CGLP), 167–187 (LKVL…IGQL), 189–210 (QLME…IGQL), 212–234 (SLRE…VDLS), 235–255 (LVKF…FREM), 257–278 (QLQV…ICTK), and 283–304 (IFKY…YLHT). Residues 311–322 (HQHVEDGKKDSD) show a composition bias toward basic and acidic residues. Residues 311–348 (HQHVEDGKKDSDSGVGSDNGDKRLSATEPSDEDTVSLN) form a disordered region. Ser370 carries the post-translational modification Phosphoserine. The tract at residues 377-398 (HQEFQPEPSLLGDSTNSGEERD) is disordered. Ser409 is modified (phosphoserine). The span at 516–525 (LQSNGSQYSP) shows a compositional bias: polar residues. The interval 516-547 (LQSNGSQYSPNEIRENSPAVSPTTNSTAPFGL) is disordered. A phosphoserine mark is found at Ser532 and Ser536. Residues 533–543 (PAVSPTTNSTA) show a composition bias toward polar residues. Phosphothreonine is present on Thr568. Residues 576 to 692 (MREEKELVEQ…TLLALGEKAP (117 aa)) enclose the Calponin-homology (CH) domain.

Interacts (via LRR repeats) with unphosphorylated DOCK8 (via DHR-2 domain); the interaction prevents the interaction between DOCK8 and CDC42.

Its subcellular location is the cytoplasm. Functionally, acts as a negative regulator of GTPase CDC42 by sequestering CDC42-guanine exchange factor DOCK8. Probably by preventing CDC42 activation, negatively regulates CD4(+) T-cell migration. This Homo sapiens (Human) protein is Leucine-rich repeat and calponin homology domain-containing protein 1 (LRCH1).